The sequence spans 201 residues: 3-isopropylmalate dehydratase small subunit 1 (201 aa).

It belongs to the LeuD family. LeuD type 1 subfamily. Heterodimer of LeuC and LeuD.

The enzyme catalyses (2R,3S)-3-isopropylmalate = (2S)-2-isopropylmalate. It participates in amino-acid biosynthesis; L-leucine biosynthesis; L-leucine from 3-methyl-2-oxobutanoate: step 2/4. Catalyzes the isomerization between 2-isopropylmalate and 3-isopropylmalate, via the formation of 2-isopropylmaleate. The polypeptide is 3-isopropylmalate dehydratase small subunit 1 (Salmonella typhimurium (strain LT2 / SGSC1412 / ATCC 700720)).